The sequence spans 305 residues: Ornithine carbamoyltransferase (305 aa).

Residues 48 to 51 (STRT), Arg99, and 126 to 129 (HPCQ) each bind carbamoyl phosphate. Residues Asn157, Asp222, and 226-227 (SM) each bind L-ornithine. Residues 262–263 (CL) and Arg290 each bind carbamoyl phosphate.

Belongs to the aspartate/ornithine carbamoyltransferase superfamily. OTCase family.

Its subcellular location is the cytoplasm. The catalysed reaction is carbamoyl phosphate + L-ornithine = L-citrulline + phosphate + H(+). The protein operates within amino-acid biosynthesis; L-arginine biosynthesis; L-arginine from L-ornithine and carbamoyl phosphate: step 1/3. Functionally, reversibly catalyzes the transfer of the carbamoyl group from carbamoyl phosphate (CP) to the N(epsilon) atom of ornithine (ORN) to produce L-citrulline. This chain is Ornithine carbamoyltransferase (argF), found in Methanocaldococcus jannaschii (strain ATCC 43067 / DSM 2661 / JAL-1 / JCM 10045 / NBRC 100440) (Methanococcus jannaschii).